A 362-amino-acid chain; its full sequence is Carbamoyl phosphate synthase pyrimidine-specific small chain (362 aa).

The segment at 1 to 168 (MKRQLILEDG…TRDPYHVPGP (168 aa)) is CPSase. L-glutamine contacts are provided by Ser45, Gly219, and Gly221. Residues 171 to 358 (RVVLVDYGMK…IKLMESNKHR (188 aa)) enclose the Glutamine amidotransferase type-1 domain. The active-site Nucleophile is the Cys246. 5 residues coordinate L-glutamine: Leu247, Gln250, Asn288, Gly290, and Tyr291. Catalysis depends on residues His331 and Glu333.

It belongs to the CarA family. As to quaternary structure, composed of two chains; the small (or glutamine) chain promotes the hydrolysis of glutamine to ammonia, which is used by the large (or ammonia) chain to synthesize carbamoyl phosphate. Tetramer of heterodimers (alpha,beta)4.

It carries out the reaction hydrogencarbonate + L-glutamine + 2 ATP + H2O = carbamoyl phosphate + L-glutamate + 2 ADP + phosphate + 2 H(+). The enzyme catalyses L-glutamine + H2O = L-glutamate + NH4(+). Its pathway is pyrimidine metabolism; UMP biosynthesis via de novo pathway; (S)-dihydroorotate from bicarbonate: step 1/3. Its function is as follows. Small subunit of the glutamine-dependent carbamoyl phosphate synthetase (CPSase). CPSase catalyzes the formation of carbamoyl phosphate from the ammonia moiety of glutamine, carbonate, and phosphate donated by ATP, constituting the first step of the biosynthetic pathway leading to pyrimidine nucleotides. The small subunit (glutamine amidotransferase) binds and cleaves glutamine to supply the large subunit with the substrate ammonia. The protein is Carbamoyl phosphate synthase pyrimidine-specific small chain of Halalkalibacterium halodurans (strain ATCC BAA-125 / DSM 18197 / FERM 7344 / JCM 9153 / C-125) (Bacillus halodurans).